The following is a 345-amino-acid chain: uncharacterized protein (345 aa).

PDZ GRASP-type domains follow at residues 27–112 and 118–207; these read CGFR…WASI and AIWH…HGVL. Positions 27 to 223 are GRASP; sequence CGFRVLKVEN…LSGPPPQPGD (197 aa). The tract at residues 229–345 is disordered; sequence PMLGGPDHKV…APQNEELVKN (117 aa). Positions 297-308 are enriched in basic and acidic residues; the sequence is KLSRELDHKTKD. Composition is skewed to polar residues over residues 309–318 and 328–338; these read ASSTNDSQTT and VNSTNDESAPQ.

Its subcellular location is the golgi apparatus membrane. This is an uncharacterized protein from Schizosaccharomyces pombe (strain 972 / ATCC 24843) (Fission yeast).